The primary structure comprises 440 residues: KH domain-containing protein 3 (440 aa).

An involved in RNA binding region spans residues Met1–Glu39. In terms of domain architecture, KH; atypical spans Asp40–Ala118. The disordered stretch occupies residues Lys132–Ala201. Phosphoserine; by ATR is present on Ser151. 2 positions are modified to phosphothreonine: Thr274 and Thr286. A required for interaction with NUMA1 and regulation of apoptosis in response to DNA damage region spans residues Val341–Leu440. Ser349 is modified (phosphoserine).

Belongs to the KHDC1 family. As to quaternary structure, component of the subcortical maternal complex (SCMC), at least composed of NLRP5, KHDC3, OOEP, and TLE6. Within the complex, interacts with NLRP5, OOEP and TLE6. The SCMC may facilitate translocation of its components between the nuclear and cytoplasmic compartments. Forms a scaffold complex with OOEP/FLOPED, and interacts with BLM and TRIM25 at DNA replication forks. Interacts with PARP1; the interaction is increased following the formation of DNA double-strand breaks. Interacts (via C-terminus) with NUMA1. In terms of processing, phosphorylation at Ser-151 is required to promote stalled fork restart. In terms of tissue distribution, detected in ovary, but not in testis or somatic tissues. In the ovary, expressed in growing oocytes.

It is found in the cytoplasm. The protein resides in the cell cortex. It localises to the nucleus. Its subcellular location is the mitochondrion. The protein localises to the cytoskeleton. It is found in the microtubule organizing center. The protein resides in the centrosome. It localises to the chromosome. In terms of biological role, component of the subcortical maternal complex (SCMC), a multiprotein complex that plays a key role in early embryonic development. The SCMC complex is a structural constituent of cytoplasmic lattices, which consist in fibrous structures found in the cytoplasm of oocytes and preimplantation embryos. They are required to store maternal proteins critical for embryonic development, such as proteins that control epigenetic reprogramming of the preimplantation embryo, and prevent their degradation or activation. KHDC3 ensures proper spindle assembly by regulating the localization of AURKA via RHOA signaling and of PLK1 via a RHOA-independent process. Required for the localization of MAD2L1 to kinetochores to enable spindle assembly checkpoint function. As part of the OOEP-KHDC3 scaffold, recruits BLM and TRIM25 to DNA replication forks, thereby promoting the ubiquitination of BLM by TRIM25, enhancing BLM retainment at replication forks and therefore promoting stalled replication fork restart. Regulates homologous recombination-mediated DNA repair via recruitment of RAD51 to sites of DNA double-strand breaks, and sustainment of PARP1 activity, which in turn modulates downstream ATM or ATR activation. Activation of ATM or ATR in response to DNA double-strand breaks may be cell-type specific. Its role in DNA double-strand break repair is independent of its role in restarting stalled replication forks. Promotes neural stem cell neurogenesis and neuronal differentiation in the hippocampus. May regulate normal development of learning, memory and anxiety. Capable of binding RNA. This is KH domain-containing protein 3 from Mus musculus (Mouse).